Here is a 535-residue protein sequence, read N- to C-terminus: Peptide chain release factor 3 (535 aa).

The tr-type G domain maps to 8-276; the sequence is ARRRTFAIIS…ALVDLAPQPG (269 aa). GTP-binding positions include 17–24, 85–89, and 139–142; these read SHPDAGKT, DTPGH, and NKMD.

It belongs to the TRAFAC class translation factor GTPase superfamily. Classic translation factor GTPase family. PrfC subfamily.

Its subcellular location is the cytoplasm. Functionally, increases the formation of ribosomal termination complexes and stimulates activities of RF-1 and RF-2. It binds guanine nucleotides and has strong preference for UGA stop codons. It may interact directly with the ribosome. The stimulation of RF-1 and RF-2 is significantly reduced by GTP and GDP, but not by GMP. This Bordetella avium (strain 197N) protein is Peptide chain release factor 3.